Reading from the N-terminus, the 259-residue chain is Eukaryotic translation initiation factor 4E1 (259 aa).

Residues 1–70 form a disordered region; sequence MQSDFHRMKN…TATTTAPAGD (70 aa). Positions 18–27 are enriched in polar residues; sequence FKTSAPSTEQ. A compositionally biased stretch (basic and acidic residues) spans 41–51; it reads EAKDVKPKEDP. Residues 54–70 show a composition bias toward low complexity; sequence TGEPAGNTATTTAPAGD. MRNA-binding positions include 100–101, 146–147, and 199–204; these read WE and RGKSNK.

Belongs to the eukaryotic initiation factor 4E family. EIF4F is a multi-subunit complex, the composition of which varies with external and internal environmental conditions. It is composed of at least eIF4A, eIF4E1 and eIF4G1. Recruited by cup in oocytes and in early embryos, preventing the interaction with eIF4G. The interaction with cup therefore prevents the translation of key transcripts such as oskar (osk) and nanos (nos) in some regions in the early embryo. Interacts with mxt. Interacts with 4E-T and Thor. Forms a RNP containing at least me31B, eIF4E1, cup, tral and pAbp; this interaction is required for the translational silencing of maternal mRNAs during the maternal-to-zygotic transition. Post-translationally, phosphorylation increases the ability of the protein to bind to mRNA caps and to form the eIF4F complex. Expressed at the posterior end of developing oocytes (at protein level). Preferential expression in the pole cells, at different developmental stages.

It is found in the cytoplasm. The protein localises to the cytoplasmic ribonucleoprotein granule. The protein resides in the nucleus. Its subcellular location is the nuclear body. In terms of biological role, recognizes and binds the 7-methylguanosine (m7G)-containing mRNA cap during an early step in the initiation of protein synthesis and facilitates ribosome binding by inducing the unwinding of the mRNAs secondary structures. In 0-1 hour embryos, forms a complex with me31B, cup, tral and pAbp which binds to various mRNAs including maternal mRNAs, and down-regulates their expression during the maternal-to-zygotic transition. This chain is Eukaryotic translation initiation factor 4E1, found in Drosophila melanogaster (Fruit fly).